A 929-amino-acid polypeptide reads, in one-letter code: Synaptopodin (929 aa).

Residue M1 is modified to N-acetylmethionine. The span at 1 to 12 (MLGPHLPPPPLA) shows a compositional bias: pro residues. The interval 1–260 (MLGPHLPPPP…EASLLRHLEK (260 aa)) is disordered. Composition is skewed to basic and acidic residues over residues 60–69 (GVSRSGDDSA) and 91–110 (SREE…DWDV). A Phosphoserine modification is found at S140. Residues 142–151 (TEKDLKEAKA) show a composition bias toward basic and acidic residues. Polar residues predominate over residues 152–170 (RSQQIAAQLTTPPSSNSRG). A Phosphoserine modification is found at S207. The span at 224 to 234 (EPGPPRHPSPQ) shows a compositional bias: pro residues. A Phosphoserine modification is found at S263. Residues 285–389 (GLHLSQNREA…TLCADGQPQA (105 aa)) form a disordered region. Over residues 317–332 (LASPSATLTTPTSNSS) the composition is skewed to low complexity. N-linked (GlcNAc...) asparagine glycosylation is present at N330. Residues 333 to 379 (HNPPATDVNQNPPATVVPQSLPLSSIQQNSSEAQLPSNGTGPASKPS) are compositionally biased toward polar residues. Residues S501 and S525 each carry the phosphoserine modification. The segment at 509–558 (FGEKAPAPQPPSLPDRSPRPQRHIMSRSPMVERRMMGQRSPASERRPLGN) is disordered. Phosphothreonine is present on T560. The PPxY motif motif lies at 562–565 (PPTY). S580 carries the post-translational modification Phosphoserine. The PPxY motif motif lies at 581-584 (PPSY). Disordered stretches follow at residues 589 to 610 (PSSD…KTGI) and 630 to 726 (KPKV…KGAE). The segment covering 646–656 (ADEKRRQRDQG) has biased composition (basic and acidic residues). Phosphoserine occurs at positions 685, 702, and 738. Positions 685-698 (SPAAAEEVVPEWAS) are enriched in low complexity. Residues 740–763 (IESSSHTPELARCPSPTMSLPSSW) form a disordered region. Position 746 is a phosphothreonine (T746). 3 positions are modified to phosphoserine: S754, S758, and S779. Phosphothreonine is present on T783. Residues P784, T804, R812, K826, S833, S854, P871, and P894 each carry the phosphoserine modification. The segment covering 826–839 (KVSPRAASPAKPSS) has biased composition (low complexity). Positions 826-916 (KVSPRAASPA…RPSFSTRNAG (91 aa)) are disordered. A compositionally biased stretch (polar residues) spans 866–880 (GLYTSPGQDSLQPTA).

It belongs to the synaptopodin family. In terms of assembly, interacts with BAIAP1. Interacts with actin. Interacts (via PPxY motifs) with WWC1 (via WW domains). Post-translationally, O-glycosylated. Expressed in cerebral cortex.

The protein localises to the cytoplasm. The protein resides in the cytoskeleton. Its subcellular location is the cell junction. It is found in the tight junction. It localises to the perikaryon. The protein localises to the cell projection. The protein resides in the dendritic spine. Its subcellular location is the postsynaptic density. It is found in the synapse. It localises to the cytosol. Its function is as follows. Actin-associated protein that may play a role in modulating actin-based shape and motility of dendritic spines and renal podocyte foot processes. Seems to be essential for the formation of spine apparatuses in spines of telencephalic neurons, which is involved in synaptic plasticity. The sequence is that of Synaptopodin (SYNPO) from Homo sapiens (Human).